The following is a 200-amino-acid chain: Protein GrpE (200 aa).

Basic and acidic residues predominate over residues 1 to 25 (MMSKQNKKDWKKFKDEHKEEHKVEN). Residues 1 to 52 (MMSKQNKKDWKKFKDEHKEEHKVENEILEEETDEESQHQEPALGHPSYTALE) form a disordered region.

Belongs to the GrpE family. As to quaternary structure, homodimer.

It localises to the cytoplasm. Functionally, participates actively in the response to hyperosmotic and heat shock by preventing the aggregation of stress-denatured proteins, in association with DnaK and GrpE. It is the nucleotide exchange factor for DnaK and may function as a thermosensor. Unfolded proteins bind initially to DnaJ; upon interaction with the DnaJ-bound protein, DnaK hydrolyzes its bound ATP, resulting in the formation of a stable complex. GrpE releases ADP from DnaK; ATP binding to DnaK triggers the release of the substrate protein, thus completing the reaction cycle. Several rounds of ATP-dependent interactions between DnaJ, DnaK and GrpE are required for fully efficient folding. The sequence is that of Protein GrpE from Legionella pneumophila subsp. pneumophila (strain Philadelphia 1 / ATCC 33152 / DSM 7513).